A 142-amino-acid polypeptide reads, in one-letter code: Transcription antitermination protein NusB (142 aa).

This sequence belongs to the NusB family.

Involved in transcription antitermination. Required for transcription of ribosomal RNA (rRNA) genes. Binds specifically to the boxA antiterminator sequence of the ribosomal RNA (rrn) operons. In Persephonella marina (strain DSM 14350 / EX-H1), this protein is Transcription antitermination protein NusB.